The primary structure comprises 485 residues: MASAAEGDMEAELTRGLLWGFQDLSLNKLATSLGASEQALRLIISIFLGYPFALFYRRYLFYKDSYLIHLFHTFTGLSIAYYNFGTQLYHSLLCIVLQFLILRLMGRTITAVLTTFCVQMGYLLAGYYNTATGTYDIKWTMPHCVLTLKLIGLAMDYYDGGKDQKSLTSEQQIYAIWGVPSLLEISGFSYFYGAFLVGPQFSMNHYMKLVRGELTDVPGKIPNSTIPALRRLALGLVYLVGYTLLSPHITEDYLLSDDYENGSFWFRCMYMLIWGKFVLYKYVTCWLVTEGVCILTGLGFNGLDEYGTAKWDACANMKVWLFETTPRFTGTIASFNINTNAWVARYFFKRLKFLGNKVLSQGLSLLFLALWHGLHSGYLVCFQMEFLIVIVERQAASLIRDSPVLSRLASITVLQPLYYLAQQTIHWLFMGYSMTAFCLFTWDKWMKVYKSIYFLGHVFFLSLLFILPYVRKVMVPRKEKLKKME.

Residue Ala2 is modified to N-acetylalanine. 7 consecutive transmembrane segments (helical) span residues 35–55, 82–102, 108–128, 139–158, 176–196, 232–252, and 283–303; these read ASEQALRLIISIFLGYPFALF, YNFGTQLYHSLLCIVLQFLIL, TITAVLTTFCVQMGYLLAGYY, WTMPHCVLTLKLIGLAMDYY, IWGVPSLLEISGFSYFYGAFL, LALGLVYLVGYTLLSPHITED, and VTCWLVTEGVCILTGLGFNGL. Active-site residues include Asn336 and His372. A run of 3 helical transmembrane segments spans residues 362 to 382, 420 to 440, and 448 to 468; these read GLSLLFLALWHGLHSGYLVCF, LAQQTIHWLFMGYSMTAFCLF, and VYKSIYFLGHVFFLSLLFILP. The short motif at 482-485 is the Di-lysine motif element; the sequence is KKME.

It belongs to the membrane-bound acyltransferase family.

It is found in the endoplasmic reticulum membrane. It catalyses the reaction a 1-acyl-sn-glycero-3-phosphocholine + an acyl-CoA = a 1,2-diacyl-sn-glycero-3-phosphocholine + CoA. It carries out the reaction a 1-acyl-sn-glycero-3-phosphoethanolamine + an acyl-CoA = a 1,2-diacyl-sn-glycero-3-phosphoethanolamine + CoA. The enzyme catalyses a 1-acyl-sn-glycero-3-phospho-L-serine + an acyl-CoA = a 1,2-diacyl-sn-glycero-3-phospho-L-serine + CoA. The catalysed reaction is (9Z,12Z)-octadecadienoyl-CoA + a 1-acyl-sn-glycero-3-phosphocholine = 1-acyl-2-(9Z,12Z)-octadecadienoyl-sn-glycero-3-phosphocholine + CoA. It catalyses the reaction (5Z,8Z,11Z,14Z)-eicosatetraenoyl-CoA + a 1-acyl-sn-glycero-3-phosphocholine = 1-acyl-2-(5Z,8Z,11Z,14Z-eicosatetraenoyl)-sn-glycero-3-phosphocholine + CoA. It carries out the reaction dodecanoyl-CoA + 1-hexadecanoyl-sn-glycero-3-phosphocholine = 1-hexadecanoyl-2-dodecanoyl-sn-glycero-3-phosphocholine + CoA. The enzyme catalyses octadecanoyl-CoA + 1-hexadecanoyl-sn-glycero-3-phosphocholine = 1-hexadecanoyl-2-octadecanoyl-sn-glycero-3-phosphocholine + CoA. The catalysed reaction is 1-dodecanoyl-sn-glycero-3-phosphocholine + hexadecanoyl-CoA = 1-dodecanoyl-2-hexadecanoyl-sn-glycero-3-phosphocholine + CoA. It catalyses the reaction 1-tetradecanoyl-sn-glycero-3-phosphocholine + hexadecanoyl-CoA = 1-tetradecanoyl-2-hexadecanoyl-sn-glycero-3-phosphocholine + CoA. It carries out the reaction 1-hexadecanoyl-sn-glycero-3-phosphocholine + hexadecanoyl-CoA = 1,2-dihexadecanoyl-sn-glycero-3-phosphocholine + CoA. The enzyme catalyses 1-octadecanoyl-sn-glycero-3-phosphocholine + hexadecanoyl-CoA = 1-octadecanoyl-2-hexadecanoyl-sn-glycero-3-phosphocholine + CoA. The catalysed reaction is 1-(9Z-octadecenoyl)-sn-glycero-3-phosphocholine + hexadecanoyl-CoA = 1-(9Z-octadecenoyl)-2-hexadecanoyl-sn-glycero-3-phosphocholine + CoA. It catalyses the reaction (9Z)-hexadecenoyl-CoA + 1-hexadecanoyl-sn-glycero-3-phosphocholine = 1-hexadecanoyl-2-(9Z-hexadecenoyl)-sn-glycero-3-phosphocholine + CoA. It carries out the reaction 1-hexadecanoyl-sn-glycero-3-phosphocholine + (9Z)-octadecenoyl-CoA = 1-hexadecanoyl-2-(9Z-octadecenoyl)-sn-glycero-3-phosphocholine + CoA. The enzyme catalyses (9Z,12Z)-octadecadienoyl-CoA + 1-hexadecanoyl-sn-glycero-3-phosphocholine = 1-hexadecanoyl-2-(9Z,12Z-octadecadienoyl)-sn-glycero-3-phosphocholine + CoA. The catalysed reaction is 1-dodecanoyl-sn-glycero-3-phosphocholine + (5Z,8Z,11Z,14Z)-eicosatetraenoyl-CoA = 1-dodecanoyl-2-(5Z,8Z,11Z,14Z)-eicosatetraenoyl-sn-glycero-3-phosphocholine + CoA. It catalyses the reaction (5Z,8Z,11Z,14Z)-eicosatetraenoyl-CoA + 1-hexadecanoyl-sn-glycero-3-phosphocholine = 1-hexadecanoyl-2-(5Z,8Z,11Z,14Z-eicosatetraenoyl)-sn-glycero-3-phosphocholine + CoA. It carries out the reaction 1-octadecanoyl-sn-glycero-3-phosphocholine + (5Z,8Z,11Z,14Z)-eicosatetraenoyl-CoA = 1-octadecanoyl-2-(5Z,8Z,11Z,14Z-eicosatetraenoyl)-sn-glycero-3-phosphocholine + CoA. The enzyme catalyses 1-eicosanoyl-sn-glycero-3-phosphocholine + (5Z,8Z,11Z,14Z)-eicosatetraenoyl-CoA = 1-eicosanoyl-2-(5Z,8Z,11Z,14Z)-eicosatetraenoyl-sn-glycero-3-phosphocholine + CoA. The catalysed reaction is 1-(9Z-octadecenoyl)-sn-glycero-3-phosphocholine + (9Z)-octadecenoyl-CoA = 1,2-di-(9Z-octadecenoyl)-sn-glycero-3-phosphocholine + CoA. It catalyses the reaction 1-(9Z-octadecenoyl)-sn-glycero-3-phosphocholine + (9Z,12Z)-octadecadienoyl-CoA = 1-(9Z)-octadecenoyl-2-(9Z,12Z)-octadecadienoyl-sn-glycero-3-phosphocholine + CoA. It carries out the reaction 1-(9Z-octadecenoyl)-sn-glycero-3-phosphocholine + (5Z,8Z,11Z,14Z)-eicosatetraenoyl-CoA = 1-(9Z)-octadecenoyl-2-(5Z,8Z,11Z,14Z)-icosatetraenoyl-sn-glycero-3-phosphocholine + CoA. The enzyme catalyses a 1-acyl-sn-glycero-3-phosphoethanolamine + (9Z,12Z)-octadecadienoyl-CoA = 1-acyl-2-(9Z,12Z)-octadecadienoyl-sn-glycero-3-phosphoethanolamine + CoA. The catalysed reaction is 1-(9Z-octadecenoyl)-sn-glycero-3-phosphoethanolamine + (9Z,12Z)-octadecadienoyl-CoA = 1-(9Z)-octadecenoyl-2-(9Z,12Z)-octadecadienoyl-sn-glycero-3-phosphoethanolamine + CoA. It catalyses the reaction 1-(10Z-heptadecenoyl)-sn-glycero-3-phosphoethanolamine + (9Z,12Z)-octadecadienoyl-CoA = 1-(10Z-heptadecenoyl)-2-(9Z,12Z-octadecadienoyl)-sn-glycero-3-phosphoethanolamine + CoA. It carries out the reaction a 1-acyl-sn-glycero-3-phosphoethanolamine + (5Z,8Z,11Z,14Z)-eicosatetraenoyl-CoA = 1-acyl-2-(5Z,8Z,11Z,14Z)-eicosatetraenoyl-sn-glycero-3-phosphoethanolamine + CoA. The enzyme catalyses 1-hexadecanoyl-sn-glycero-3-phosphoethanolamine + (5Z,8Z,11Z,14Z)-eicosatetraenoyl-CoA = 1-hexadecanoyl-2-(5Z,8Z,11Z,14Z-eicosatetraenoyl)-sn-glycero-3-phosphoethanolamine + CoA. The catalysed reaction is 1-(9Z-octadecenoyl)-sn-glycero-3-phosphoethanolamine + (5Z,8Z,11Z,14Z)-eicosatetraenoyl-CoA = 1-(9Z)-octadecenoyl-2-(5Z,8Z,11Z,14Z)-eicosatetraenoyl-sn-glycero-3-phosphoethanolamine + CoA. It catalyses the reaction 1-(10Z-heptadecenoyl)-sn-glycero-3-phosphoethanolamine + (5Z,8Z,11Z,14Z)-eicosatetraenoyl-CoA = 1-(10Z-heptadecenoyl)-2-(5Z,8Z,11Z,14Z-eicosatetraenoyl)-sn-glycero-3-phosphoethanolamine + CoA. It carries out the reaction a 1-O-(1Z-alkenyl)-sn-glycero-3-phosphoethanolamine + (5Z,8Z,11Z,14Z)-eicosatetraenoyl-CoA = 1-O-(1Z)-alkenyl-2-(5Z,8Z,11Z,14Z)-eicosatetraenoyl-sn-glycero-3-phosphoethanolamine + CoA. The enzyme catalyses a 1-acyl-sn-glycero-3-phospho-L-serine + (9Z,12Z)-octadecadienoyl-CoA = 1-acyl-2-(9Z,12Z-octadecadienoyl)-sn-glycero-3-phospho-L-serine + CoA. The catalysed reaction is a 1-acyl-sn-glycero-3-phospho-L-serine + (5Z,8Z,11Z,14Z)-eicosatetraenoyl-CoA = 1-acyl-2-(5Z,8Z,11Z,14Z-eicosatetraenoyl)-sn-glycero-3-phospho-L-serine + CoA. It catalyses the reaction 1-hexadecanoyl-sn-glycero-3-phospho-L-serine + (9Z)-octadecenoyl-CoA = 1-hexadecanoyl-2-(9Z-octadecenoyl)-sn-glycero-3-phospho-L-serine + CoA. It carries out the reaction 1-(9Z-octadecenoyl)-sn-glycero-3-phospho-L-serine + (9Z)-octadecenoyl-CoA = 1,2-di-(9Z)-octadecenoyl-sn-glycero-3-phospho-L-serine + CoA. The enzyme catalyses 1-hexadecanoyl-sn-glycero-3-phospho-L-serine + (9Z,12Z)-octadecadienoyl-CoA = 1-hexadecanoyl-2-(9Z,12Z-octadecadienoyl)-sn-glycero-3-phospho-L-serine + CoA. The catalysed reaction is 1-(9Z-octadecenoyl)-sn-glycero-3-phospho-L-serine + (9Z,12Z)-octadecadienoyl-CoA = 1-(9Z-octadecenoyl)-2-(9Z,12Z-octadienoyl)-sn-glycero-3-phospho-L-serine + CoA. It catalyses the reaction 1-hexadecanoyl-sn-glycero-3-phospho-L-serine + (5Z,8Z,11Z,14Z)-eicosatetraenoyl-CoA = 1-hexadecanoyl-2-(5Z,8Z,11Z,14Z-eicosatetraenoyl)-sn-glycero-3-phospho-L-serine + CoA. It carries out the reaction 1-(9Z-octadecenoyl)-sn-glycero-3-phospho-L-serine + (5Z,8Z,11Z,14Z)-eicosatetraenoyl-CoA = 1-(9Z-octadecenoyl)-2-(5Z,8Z,11Z,14Z-eicosatetraenoyl)-sn-glycero-3-phospho-L-serine + CoA. The protein operates within lipid metabolism; phospholipid metabolism. Functionally, lysophospholipid O-acyltransferase (LPLAT) that catalyzes the reacylation step of the phospholipid remodeling process also known as the Lands cycle. Catalyzes transfer of the fatty acyl chain from fatty acyl-CoA to 1-acyl lysophospholipid to form various classes of phospholipids. Converts 1-acyl lysophosphatidylcholine (LPC) into phosphatidylcholine (PC) (LPCAT activity), 1-acyl lysophosphatidylserine (LPS) into phosphatidylserine (PS) (LPSAT activity) and 1-acyl lysophosphatidylethanolamine (LPE) into phosphatidylethanolamine (PE) (LPEAT activity). Favors polyunsaturated fatty acyl-CoAs as acyl donors compared to saturated fatty acyl-CoAs. Has higher activity for LPC acyl acceptors compared to LPEs and LPSs. Can also transfer the fatty acyl chain from fatty acyl-CoA to 1-O-alkyl lysophospholipid or 1-O-alkenyl lysophospholipid with lower efficiency. Acts as a major LPC O-acyltransferase in liver and intestine. As a component of the liver X receptor/NR1H3 or NR1H2 signaling pathway, mainly catalyzes the incorporation of arachidonate into PCs of endoplasmic reticulum (ER) membranes, increasing membrane dynamics and enabling triacylglycerols transfer to nascent very low-density lipoprotein (VLDL) particles. Promotes processing of sterol regulatory protein SREBF1 in hepatocytes, likely by facilitating the translocation of SREBF1-SCAP complex from ER to the Golgi apparatus. Participates in mechanisms by which the liver X receptor/NR1H3 or NR1H2 signaling pathway counteracts lipid-induced ER stress response and inflammation. Down-regulates hepatic inflammation by limiting arachidonic acid availability for synthesis of inflammatory eicosanoids, such as prostaglandins. In enterocytes, acts as a component of a gut-brain feedback loop that coordinates dietary lipid absorption and food intake. Regulates the abundance of PCs containing linoleate and arachidonate in enterocyte membranes, enabling passive diffusion of fatty acids and cholesterol across the membrane for efficient chylomicron assembly. In the intestinal crypt, acts as a component of dietary-responsive phospholipid-cholesterol axis, regulating the biosynthesis of cholesterol and its mitogenic effects on intestinal stem cells. This is Lysophospholipid acyltransferase 5 (LPCAT3) from Bos taurus (Bovine).